The chain runs to 155 residues: 6,7-dimethyl-8-ribityllumazine synthase (155 aa).

Residues Phe23, Ala57 to Glu59, and Ala81 to Ile83 contribute to the 5-amino-6-(D-ribitylamino)uracil site. Ala86 to Thr87 provides a ligand contact to (2S)-2-hydroxy-3-oxobutyl phosphate. His89 acts as the Proton donor in catalysis. Phe114 lines the 5-amino-6-(D-ribitylamino)uracil pocket. Residue Arg128 participates in (2S)-2-hydroxy-3-oxobutyl phosphate binding.

Belongs to the DMRL synthase family.

The enzyme catalyses (2S)-2-hydroxy-3-oxobutyl phosphate + 5-amino-6-(D-ribitylamino)uracil = 6,7-dimethyl-8-(1-D-ribityl)lumazine + phosphate + 2 H2O + H(+). Its pathway is cofactor biosynthesis; riboflavin biosynthesis; riboflavin from 2-hydroxy-3-oxobutyl phosphate and 5-amino-6-(D-ribitylamino)uracil: step 1/2. Its function is as follows. Catalyzes the formation of 6,7-dimethyl-8-ribityllumazine by condensation of 5-amino-6-(D-ribitylamino)uracil with 3,4-dihydroxy-2-butanone 4-phosphate. This is the penultimate step in the biosynthesis of riboflavin. The sequence is that of 6,7-dimethyl-8-ribityllumazine synthase from Geotalea uraniireducens (strain Rf4) (Geobacter uraniireducens).